We begin with the raw amino-acid sequence, 35 residues long: Putative neurotoxin (35 aa).

Residues 1 to 35 (KEGYPKNSEGCKITCLFNDPYCKGLCINLSTQADY) enclose the LCN-type CS-alpha/beta domain.

In terms of tissue distribution, expressed by the venom gland.

Its subcellular location is the secreted. In terms of biological role, causes paralysis and death in insects (A.domestica). This Rhopalurus junceus (Caribbean blue scorpion) protein is Putative neurotoxin.